We begin with the raw amino-acid sequence, 408 residues long: Tyrosine--tRNA ligase (408 aa).

Positions 46 to 55 (PTAPDLHVGH) match the 'HIGH' region motif. The 'KMSKS' region motif lies at 230 to 234 (KMSKS). Residue lysine 233 participates in ATP binding. Residues 343 to 404 (VWICRLLTDA…GKRRFARIKF (62 aa)) enclose the S4 RNA-binding domain.

The protein belongs to the class-I aminoacyl-tRNA synthetase family. TyrS type 2 subfamily. As to quaternary structure, homodimer.

It is found in the cytoplasm. It carries out the reaction tRNA(Tyr) + L-tyrosine + ATP = L-tyrosyl-tRNA(Tyr) + AMP + diphosphate + H(+). Catalyzes the attachment of tyrosine to tRNA(Tyr) in a two-step reaction: tyrosine is first activated by ATP to form Tyr-AMP and then transferred to the acceptor end of tRNA(Tyr). The protein is Tyrosine--tRNA ligase of Syntrophotalea carbinolica (strain DSM 2380 / NBRC 103641 / GraBd1) (Pelobacter carbinolicus).